The following is a 141-amino-acid chain: Nucleoside diphosphate kinase (141 aa).

ATP contacts are provided by Lys11, Phe59, Arg87, Thr93, Arg104, and Asn114. His117 acts as the Pros-phosphohistidine intermediate in catalysis.

This sequence belongs to the NDK family. As to quaternary structure, homotetramer. The cofactor is Mg(2+).

It is found in the cytoplasm. It catalyses the reaction a 2'-deoxyribonucleoside 5'-diphosphate + ATP = a 2'-deoxyribonucleoside 5'-triphosphate + ADP. The enzyme catalyses a ribonucleoside 5'-diphosphate + ATP = a ribonucleoside 5'-triphosphate + ADP. In terms of biological role, major role in the synthesis of nucleoside triphosphates other than ATP. The ATP gamma phosphate is transferred to the NDP beta phosphate via a ping-pong mechanism, using a phosphorylated active-site intermediate. The protein is Nucleoside diphosphate kinase of Histophilus somni (strain 2336) (Haemophilus somnus).